Reading from the N-terminus, the 584-residue chain is Aspartate--tRNA(Asp/Asn) ligase (584 aa).

Residue Glu-177 coordinates L-aspartate. Residues 201 to 204 (QLFK) are aspartate. Arg-223 contributes to the L-aspartate binding site. Residues 223–225 (RDE) and Gln-232 each bind ATP. An L-aspartate-binding site is contributed by His-447. Residue Glu-481 coordinates ATP. Arg-488 contacts L-aspartate. 533–536 (GLDR) is an ATP binding site.

Belongs to the class-II aminoacyl-tRNA synthetase family. Type 1 subfamily. Homodimer.

The protein localises to the cytoplasm. The enzyme catalyses tRNA(Asx) + L-aspartate + ATP = L-aspartyl-tRNA(Asx) + AMP + diphosphate. Functionally, aspartyl-tRNA synthetase with relaxed tRNA specificity since it is able to aspartylate not only its cognate tRNA(Asp) but also tRNA(Asn). Reaction proceeds in two steps: L-aspartate is first activated by ATP to form Asp-AMP and then transferred to the acceptor end of tRNA(Asp/Asn). The sequence is that of Aspartate--tRNA(Asp/Asn) ligase from Chlamydia pneumoniae (Chlamydophila pneumoniae).